Here is a 339-residue protein sequence, read N- to C-terminus: Ribosomal RNA large subunit methyltransferase M (339 aa).

Residues Ser176, 206–209 (APGG), Asp225, Asp245, and Asp261 contribute to the S-adenosyl-L-methionine site. The active-site Proton acceptor is Lys290.

Belongs to the class I-like SAM-binding methyltransferase superfamily. RNA methyltransferase RlmE family. RlmM subfamily. Monomer.

It is found in the cytoplasm. The catalysed reaction is cytidine(2498) in 23S rRNA + S-adenosyl-L-methionine = 2'-O-methylcytidine(2498) in 23S rRNA + S-adenosyl-L-homocysteine + H(+). In terms of biological role, catalyzes the 2'-O-methylation at nucleotide C2498 in 23S rRNA. The sequence is that of Ribosomal RNA large subunit methyltransferase M from Halorhodospira halophila (strain DSM 244 / SL1) (Ectothiorhodospira halophila (strain DSM 244 / SL1)).